The following is a 483-amino-acid chain: MSLQAPPRLLELAEQSLLRDRALAIPTLEELPRELFPPLFMEAFTRRCCETLTTMVQAWPFTCLPLGSLMKSCNLEIFRAVLEGLDALLAQKVRPRRWKLQVLDLRNVDENFWGIWSGASALSPEALSKRRTAGNCPRPGGQQPLMVILDLCFKNGTLDECLTHFLEWGKQRKGLLHVCCKELQIFGIAIHRIIEVLNTVELDCIQEVEVCCPWELSILIRFAPYLGQMRNLRKLVLFNIHVSACIPLDRKEQFVIQFTSQFLKLDYFQKLYMHSVSFLEGHLDQLLRCLQAPLETVVMTECLLSESDLKHLSWCPSIRQLKELDLRGITLTHFSPEPLSVLLEQAEATLQTLDLEDCGIVDSQLSAILPALSRCSQLSTFSFCGNLISMAALENLLRHTVGLSKLSLELYPAPLESYDAQGALCWGRFSQLGAELMKTLRDLRQPKIIVFSTVPCPRCGIRASYDLEPSHCLLNACCQGGFI.

The stretch at 97–122 (RWKLQVLDLRNVDENFWGIWSGASAL) is one LRR 1; degenerate repeat. The stretch at 177 to 201 (HVCCKELQIFGIAIHRIIEVLNTVE) is one LRR 2; degenerate repeat. Residues 202-228 (LDCIQEVEVCCPWELSILIRFAPYLGQ) form an LRR 3; degenerate repeat. An LRR 4; degenerate repeat occupies 229–264 (MRNLRKLVLFNIHVSACIPLDRKEQFVIQFTSQFLK). LRR repeat units lie at residues 265–290 (LDYF…LRCL), 291–322 (QAPL…RQLK), 323–341 (ELDL…PLSV), 347–374 (EATL…ALSR), and 375–399 (CSQL…LLRH).

This sequence belongs to the PRAME family.

This Homo sapiens (Human) protein is PRAME family member 12.